The primary structure comprises 169 residues: dCTP pyrophosphatase 1 (169 aa).

The tract at residues 1 to 26 is disordered; sequence MSASEEMLGGARGESTTATGPFSFSS. A compositionally biased stretch (polar residues) spans 14–26; the sequence is ESTTATGPFSFSS. Residues H37 and 46–50 contribute to the substrate site; that span reads WEQFH. 2 residues coordinate Mg(2+): E62 and E65. W72 is a substrate binding site. S84 carries the phosphoserine modification. Residues E94 and D97 each contribute to the Mg(2+) site. Y101 is a binding site for substrate. The interval 143-169 is disordered; sequence LPHGATSENQAMGPADPASESTGQVST.

Homotetramer. It depends on Mg(2+) as a cofactor.

It localises to the cytoplasm. It is found in the cytosol. The catalysed reaction is dCTP + H2O = dCMP + diphosphate + H(+). Hydrolyzes deoxynucleoside triphosphates (dNTPs) to the corresponding nucleoside monophosphates. Has a strong preference for dCTP and its analogs including 5-iodo-dCTP and 5-methyl-dCTP for which it may even have a higher efficiency. May protect DNA or RNA against the incorporation of these genotoxic nucleotide analogs through their catabolism. This Bos taurus (Bovine) protein is dCTP pyrophosphatase 1.